A 503-amino-acid chain; its full sequence is Aromatase (503 aa).

The chain crosses the membrane as a helical span at residues 21–41; it reads VTVSAMPLLLIMGLLLLIWNC. Positions 309 and 374 each coordinate substrate. A heme-binding site is contributed by C437.

It belongs to the cytochrome P450 family. Requires heme as cofactor.

The protein resides in the endoplasmic reticulum membrane. It localises to the microsome membrane. It catalyses the reaction testosterone + 3 reduced [NADPH--hemoprotein reductase] + 3 O2 = 17beta-estradiol + formate + 3 oxidized [NADPH--hemoprotein reductase] + 4 H2O + 4 H(+). The enzyme catalyses androst-4-ene-3,17-dione + 3 reduced [NADPH--hemoprotein reductase] + 3 O2 = estrone + formate + 3 oxidized [NADPH--hemoprotein reductase] + 4 H2O + 4 H(+). The catalysed reaction is androst-4-ene-3,17-dione + reduced [NADPH--hemoprotein reductase] + O2 = 19-hydroxyandrost-4-ene-3,17-dione + oxidized [NADPH--hemoprotein reductase] + H2O + H(+). It carries out the reaction 19-hydroxyandrost-4-ene-3,17-dione + reduced [NADPH--hemoprotein reductase] + O2 = 19-oxo-androst-4-ene-3,17-dione + oxidized [NADPH--hemoprotein reductase] + 2 H2O + H(+). It catalyses the reaction 19-oxo-androst-4-ene-3,17-dione + reduced [NADPH--hemoprotein reductase] + O2 = estrone + formate + oxidized [NADPH--hemoprotein reductase] + H2O + 2 H(+). The enzyme catalyses estrone + reduced [NADPH--hemoprotein reductase] + O2 = 2-hydroxyestrone + oxidized [NADPH--hemoprotein reductase] + H2O + H(+). The catalysed reaction is 17beta-hydroxy-5alpha-androstan-3-one + reduced [NADPH--hemoprotein reductase] + O2 = 17beta,19-dihydroxy-3-oxo-5alpha-androstanone + oxidized [NADPH--hemoprotein reductase] + H2O + H(+). It carries out the reaction 17beta,19-dihydroxy-3-oxo-5alpha-androstanone + reduced [NADPH--hemoprotein reductase] + O2 = 17beta-hydroxy-3,19-dioxo-5alpha-androstanone + oxidized [NADPH--hemoprotein reductase] + 2 H2O + H(+). It catalyses the reaction 17beta-hydroxy-3,19-dioxo-5alpha-androstanone + reduced [NADPH--hemoprotein reductase] + O2 = 17beta-hydroxy-3-oxo-19-nor-5alpha-androst-1-ene + formate + oxidized [NADPH--hemoprotein reductase] + H2O + 2 H(+). Its pathway is steroid hormone biosynthesis. A cytochrome P450 monooxygenase that catalyzes the conversion of C19 androgens, androst-4-ene-3,17-dione (androstenedione) and testosterone to the C18 estrogens, estrone and estradiol, respectively. Catalyzes three successive oxidations of C19 androgens: two conventional oxidations at C19 yielding 19-hydroxy and 19-oxo/19-aldehyde derivatives, followed by a third oxidative aromatization step that involves C1-beta hydrogen abstraction combined with cleavage of the C10-C19 bond to yield a phenolic A ring and formic acid. Alternatively, the third oxidative reaction yields a 19-norsteroid and formic acid. Converts dihydrotestosterone to delta1,10-dehydro 19-nordihydrotestosterone and may play a role in homeostasis of this potent androgen. Also displays 2-hydroxylase activity toward estrone. Mechanistically, uses molecular oxygen inserting one oxygen atom into a substrate, and reducing the second into a water molecule, with two electrons provided by NADPH via cytochrome P450 reductase (CPR; NADPH-ferrihemoprotein reductase). This Mus musculus (Mouse) protein is Aromatase (Cyp19a1).